A 393-amino-acid polypeptide reads, in one-letter code: Serine/threonine-protein phosphatase 2A activator 1 (393 aa).

Residues 328–393 are disordered; the sequence is EKEEESIEQA…TSFSRDRLRR (66 aa). Polar residues-rich tracts occupy residues 335–356 and 365–386; these read EQAN…TSTS and SGNN…QTSF. A Phosphoserine modification is found at Ser341.

The protein belongs to the PTPA-type PPIase family. As to quaternary structure, interacts with the phosphatase PP2A-like catalytic subunits PPG1, PPH3 and SIT4. Forms a ternary complex with SIT4-TAP42.

The protein localises to the cytoplasm. It is found in the nucleus. The catalysed reaction is [protein]-peptidylproline (omega=180) = [protein]-peptidylproline (omega=0). In terms of biological role, PPIases accelerate the folding of proteins. It catalyzes the cis-trans isomerization of proline imidic peptide bonds in oligopeptides. Acts as a regulatory subunit for TAP42-associated PP2A-like phosphatases modulating their activity or substrate specificity, probably by inducing a conformational change in the catalytic subunit, a direct target of the PPIase. Can reactivate inactive phosphatase PP2A-phosphatase methylesterase complexes (PP2Ai) in presence of ATP and Mg(2+) by dissociating the inactive form from the complex. Involved in the regulation of cell cycle progression, mitotic spindle formation, bud morphogenesis and DNA repair. The sequence is that of Serine/threonine-protein phosphatase 2A activator 1 (RRD1) from Saccharomyces cerevisiae (strain ATCC 204508 / S288c) (Baker's yeast).